The primary structure comprises 208 residues: 3-demethoxyubiquinol 3-hydroxylase (208 aa).

6 residues coordinate Fe cation: Glu-57, Glu-87, His-90, Glu-139, Glu-171, and His-174.

The protein belongs to the COQ7 family. Requires Fe cation as cofactor.

It localises to the cell membrane. The enzyme catalyses a 5-methoxy-2-methyl-3-(all-trans-polyprenyl)benzene-1,4-diol + AH2 + O2 = a 3-demethylubiquinol + A + H2O. It participates in cofactor biosynthesis; ubiquinone biosynthesis. Catalyzes the hydroxylation of 2-nonaprenyl-3-methyl-6-methoxy-1,4-benzoquinol during ubiquinone biosynthesis. The polypeptide is 3-demethoxyubiquinol 3-hydroxylase (Burkholderia lata (strain ATCC 17760 / DSM 23089 / LMG 22485 / NCIMB 9086 / R18194 / 383)).